A 367-amino-acid chain; its full sequence is 3-dehydroquinate synthase (367 aa).

Residues 69 to 74, 103 to 107, 127 to 128, lysine 140, lysine 149, and 167 to 170 contribute to the NAD(+) site; these read DGEAFK, GVVGD, TT, and TLAT. Positions 182, 245, and 262 each coordinate Zn(2+).

It belongs to the sugar phosphate cyclases superfamily. Dehydroquinate synthase family. Requires Co(2+) as cofactor. Zn(2+) serves as cofactor. The cofactor is NAD(+).

It is found in the cytoplasm. It catalyses the reaction 7-phospho-2-dehydro-3-deoxy-D-arabino-heptonate = 3-dehydroquinate + phosphate. Its pathway is metabolic intermediate biosynthesis; chorismate biosynthesis; chorismate from D-erythrose 4-phosphate and phosphoenolpyruvate: step 2/7. Its function is as follows. Catalyzes the conversion of 3-deoxy-D-arabino-heptulosonate 7-phosphate (DAHP) to dehydroquinate (DHQ). In Azotobacter vinelandii (strain DJ / ATCC BAA-1303), this protein is 3-dehydroquinate synthase.